Consider the following 152-residue polypeptide: Lipoprotein signal peptidase (152 aa).

3 consecutive transmembrane segments (helical) span residues 33–53 (VVPP…FGLL), 58–78 (MLFV…YFKI), and 83–102 (PVLD…NLAD). Active-site residues include D111 and D125. Residues 120–140 (VFNLADTAIVTGAFLLAWALL) form a helical membrane-spanning segment.

Belongs to the peptidase A8 family.

Its subcellular location is the cell membrane. The catalysed reaction is Release of signal peptides from bacterial membrane prolipoproteins. Hydrolyzes -Xaa-Yaa-Zaa-|-(S,diacylglyceryl)Cys-, in which Xaa is hydrophobic (preferably Leu), and Yaa (Ala or Ser) and Zaa (Gly or Ala) have small, neutral side chains.. It functions in the pathway protein modification; lipoprotein biosynthesis (signal peptide cleavage). Functionally, this protein specifically catalyzes the removal of signal peptides from prolipoproteins. The sequence is that of Lipoprotein signal peptidase from Pelotomaculum thermopropionicum (strain DSM 13744 / JCM 10971 / SI).